The sequence spans 883 residues: Protein SEY1 homolog (883 aa).

The Cytoplasmic segment spans residues 1 to 795 (MQMDRKTQII…ETGGKMSLKN (795 aa)). The region spanning 33 to 279 (GFNYNVVAIL…IPSDGFAHYC (247 aa)) is the GB1/RHD3-type G domain. 43-50 (GSQSSGKS) is a GTP binding site. Positions 673–693 (LDEIMDVLKSKLDEISDNLSS) form a coiled coil. The helical transmembrane segment at 796-816 (VPLFFWVILLILGWNELLFFI) threads the bilayer. Topologically, residues 817–819 (RFF) are lumenal. A helical membrane pass occupies residues 820–840 (FRLNIILPLFLAAAVILSTLF). At 841-883 (FNGNMEVLSTINKVVFFLAKSSFGFYRQLQTMGEKVAQVPTAD) the chain is on the cytoplasmic side.

The protein belongs to the TRAFAC class dynamin-like GTPase superfamily. GB1/RHD3 GTPase family. RHD3 subfamily.

The protein resides in the endoplasmic reticulum membrane. In terms of biological role, probable GTP-binding protein involved in generating and maintaining the structure of the tubular endoplasmic reticulum network. The protein is Protein SEY1 homolog of Plasmodium knowlesi (strain H).